The following is a 428-amino-acid chain: Folylpolyglutamate synthase (428 aa).

49–52 (GKGS) provides a ligand contact to ATP. S73 contributes to the Mg(2+) binding site. The (6R)-5,10-methylenetetrahydrofolyl-(gamma-L-Glu)n site is built by F75 and R82. Positions 143 and 170 each coordinate Mg(2+). N6-carboxylysine is present on K185. Residues N264, R300, and 313–316 (DGAH) each bind ATP. Position 417 (S417) interacts with (6R)-5,10-methylenetetrahydrofolyl-(gamma-L-Glu)n.

Belongs to the folylpolyglutamate synthase family. In terms of assembly, monomer. Mg(2+) is required as a cofactor.

The enzyme catalyses (6S)-5,6,7,8-tetrahydrofolyl-(gamma-L-Glu)(n) + L-glutamate + ATP = (6S)-5,6,7,8-tetrahydrofolyl-(gamma-L-Glu)(n+1) + ADP + phosphate + H(+). It carries out the reaction (6R)-5,10-methylenetetrahydrofolyl-(gamma-L-Glu)(n) + L-glutamate + ATP = (6R)-5,10-methylenetetrahydrofolyl-(gamma-L-Glu)(n+1) + ADP + phosphate + H(+). The catalysed reaction is 10-formyltetrahydrofolyl-(gamma-L-Glu)(n) + L-glutamate + ATP = 10-formyltetrahydrofolyl-(gamma-L-Glu)(n+1) + ADP + phosphate + H(+). Its activity is regulated as follows. Competitively inhibited by adenosine 5'-(3-thio)triphosphate and beta,gamma-methylene-ATP. In terms of biological role, involved in the conversion of folates to polyglutamate derivatives, and likely functions in the retention of cellular folate pools. Catalyzes successive MgATP-dependent additions of glutamate to a pteroylmonoglutamate substrate, with a high preference for 5,10-methylenetetrahydrofolate (mTHF). Thus, metabolizes mTHF to the tetraglutamate derivative, but longer glutamate chain length products are not observed. Tetrahydrofolate (H4PteGlu) and 10-formyl-H4PteGlu are poorer folate substrates. In contrast to E.coli FolC, this enzyme does not display dihydrofolate synthase activity. In Lacticaseibacillus casei (Lactobacillus casei), this protein is Folylpolyglutamate synthase.